The following is a 153-amino-acid chain: uncharacterized protein (153 aa).

An N-terminal signal peptide occupies residues 1-21 (MKITITSLLFFLVMIVELASA).

This is an uncharacterized protein from Saccharomyces cerevisiae (strain ATCC 204508 / S288c) (Baker's yeast).